Consider the following 33-residue polypeptide: Brevinin-2DYa (33 aa).

A disulfide bridge connects residues Cys-27 and Cys-33.

In terms of tissue distribution, expressed by the skin glands.

The protein localises to the secreted. Antimicrobial peptide. This chain is Brevinin-2DYa, found in Rana dybowskii (Dybovsky's frog).